We begin with the raw amino-acid sequence, 252 residues long: Mannose-P-dolichol utilization defect 1 protein homolog (252 aa).

In terms of domain architecture, PQ-loop 1 spans 34-100 (KALLSKGLGL…HGYPFSAWGD (67 aa)). 7 helical membrane-spanning segments follow: residues 41–61 (LGLA…LKIL), 69–89 (INIV…SYNF), 98–118 (WGDS…VLFF), 126–146 (GLFL…LTPM), 148–168 (VLFT…LSQA), 180–200 (LSAA…FTSI), and 207–227 (MIIL…GQLI). Residues 157–211 (IPILLVGKLSQAYTNYQAGSTGQLSAATVIMMFAGSVARIFTSIQETGDFMIILT) form the PQ-loop 2 domain.

Belongs to the MPDU1 (TC 2.A.43.3) family.

The protein resides in the membrane. This chain is Mannose-P-dolichol utilization defect 1 protein homolog, found in Drosophila melanogaster (Fruit fly).